The sequence spans 887 residues: Bifunctional uridylyltransferase/uridylyl-removing enzyme (887 aa).

Residues 1 to 329 (MKGLNAKPFS…FPDEEAVTTI (329 aa)) form a uridylyltransferase region. A uridylyl-removing region spans residues 330-686 (INERFQKRGD…TRAAETGAGV (357 aa)). The HD domain occupies 448–570 (VDEHILMVVR…MRDERHLIAL (123 aa)). ACT domains are found at residues 687-772 (EVLV…GRLS) and 796-871 (VLSI…PETP). The interval 864 to 887 (TSPQPETPGKAPGKPSAGDRIIPR) is disordered.

Belongs to the GlnD family. Mg(2+) is required as a cofactor.

It catalyses the reaction [protein-PII]-L-tyrosine + UTP = [protein-PII]-uridylyl-L-tyrosine + diphosphate. The catalysed reaction is [protein-PII]-uridylyl-L-tyrosine + H2O = [protein-PII]-L-tyrosine + UMP + H(+). With respect to regulation, uridylyltransferase (UTase) activity is inhibited by glutamine, while glutamine activates uridylyl-removing (UR) activity. Its function is as follows. Modifies, by uridylylation and deuridylylation, the PII regulatory proteins (GlnB and homologs), in response to the nitrogen status of the cell that GlnD senses through the glutamine level. Under low glutamine levels, catalyzes the conversion of the PII proteins and UTP to PII-UMP and PPi, while under higher glutamine levels, GlnD hydrolyzes PII-UMP to PII and UMP (deuridylylation). Thus, controls uridylylation state and activity of the PII proteins, and plays an important role in the regulation of nitrogen assimilation and metabolism. The polypeptide is Bifunctional uridylyltransferase/uridylyl-removing enzyme (Nitrosospira multiformis (strain ATCC 25196 / NCIMB 11849 / C 71)).